A 298-amino-acid polypeptide reads, in one-letter code: Heat stress transcription factor C-2a (298 aa).

The tract at residues Ser-105–Ala-128 is disordered. Positions Leu-145–Val-181 are hydrophobic repeat HR-A/B. The Nuclear localization signal motif lies at Lys-213–Arg-216.

Belongs to the HSF family. Class C subfamily. As to quaternary structure, homotrimer. In terms of processing, exhibits temperature-dependent phosphorylation.

The protein resides in the nucleus. Functionally, transcriptional regulator that specifically binds DNA of heat shock promoter elements (HSE). This is Heat stress transcription factor C-2a (HSFC2A) from Oryza sativa subsp. japonica (Rice).